A 225-amino-acid chain; its full sequence is Biosynthetic peptidoglycan transglycosylase (225 aa).

Residues 8 to 28 (VLLIFIGAILLIQLWIFSSLV) form a helical membrane-spanning segment.

The protein belongs to the glycosyltransferase 51 family.

Its subcellular location is the cell inner membrane. It carries out the reaction [GlcNAc-(1-&gt;4)-Mur2Ac(oyl-L-Ala-gamma-D-Glu-L-Lys-D-Ala-D-Ala)](n)-di-trans,octa-cis-undecaprenyl diphosphate + beta-D-GlcNAc-(1-&gt;4)-Mur2Ac(oyl-L-Ala-gamma-D-Glu-L-Lys-D-Ala-D-Ala)-di-trans,octa-cis-undecaprenyl diphosphate = [GlcNAc-(1-&gt;4)-Mur2Ac(oyl-L-Ala-gamma-D-Glu-L-Lys-D-Ala-D-Ala)](n+1)-di-trans,octa-cis-undecaprenyl diphosphate + di-trans,octa-cis-undecaprenyl diphosphate + H(+). It participates in cell wall biogenesis; peptidoglycan biosynthesis. Peptidoglycan polymerase that catalyzes glycan chain elongation from lipid-linked precursors. The polypeptide is Biosynthetic peptidoglycan transglycosylase (Acinetobacter baumannii (strain ACICU)).